Reading from the N-terminus, the 119-residue chain is Basic phospholipase A2 homolog 1 (119 aa).

Disulfide bonds link C11/C72, C27/C118, C29/C45, C44/C99, C51/C92, C61/C85, and C79/C90. The segment at 107 to 117 is important for membrane-damaging activities in eukaryotes and bacteria; heparin-binding; the sequence is KENYNIDPKKR.

Belongs to the phospholipase A2 family. Group I subfamily. D49 sub-subfamily. As to expression, expressed by the venom gland.

The protein localises to the secreted. This is Basic phospholipase A2 homolog 1 from Notechis scutatus scutatus (Mainland tiger snake).